The sequence spans 221 residues: Interleukin-12 subunit alpha (221 aa).

The signal sequence occupies residues methionine 1–glycine 25. 3 cysteine pairs are disulfide-bonded: cysteine 39-cysteine 112, cysteine 66-cysteine 198, and cysteine 87-cysteine 125. Asparagine 95 is a glycosylation site (N-linked (GlcNAc...) asparagine).

This sequence belongs to the IL-6 superfamily. Heterodimer with IL12B; disulfide-linked. This heterodimer is known as interleukin IL-12. Heterodimer with EBI3/IL27B; not disulfide-linked. This heterodimer is known as interleukin IL-35. Interacts with NBR1; this interaction promotes IL-12 secretion.

The protein resides in the secreted. Functionally, heterodimerizes with IL12B to form the IL-12 cytokine or with EBI3/IL27B to form the IL-35 cytokine. IL-12 is primarily produced by professional antigen-presenting cells (APCs) such as B-cells and dendritic cells (DCs) as well as macrophages and granulocytes and regulates T-cell and natural killer-cell responses, induces the production of interferon-gamma (IFN-gamma), favors the differentiation of T-helper 1 (Th1) cells and is an important link between innate resistance and adaptive immunity. Mechanistically, exerts its biological effects through a receptor composed of IL12R1 and IL12R2 subunits. Binding to the receptor results in the rapid tyrosine phosphorylation of a number of cellular substrates including the JAK family kinases TYK2 and JAK2. In turn, recruited STAT4 gets phosphorylated and translocates to the nucleus where it regulates cytokine/growth factor responsive genes. As part of IL-35, plays essential roles in maintaining the immune homeostasis of the liver microenvironment and also functions as an immune-suppressive cytokine. Mediates biological events through unconventional receptors composed of IL12RB2 and gp130/IL6ST heterodimers or homodimers. Signaling requires the transcription factors STAT1 and STAT4, which form a unique heterodimer that binds to distinct DNA sites. The polypeptide is Interleukin-12 subunit alpha (IL12A) (Bos taurus (Bovine)).